We begin with the raw amino-acid sequence, 184 residues long: GTP cyclohydrolase 1 (184 aa).

3 residues coordinate Zn(2+): Cys-75, His-78, and Cys-146.

The protein belongs to the GTP cyclohydrolase I family. Homomer.

The enzyme catalyses GTP + H2O = 7,8-dihydroneopterin 3'-triphosphate + formate + H(+). It functions in the pathway cofactor biosynthesis; 7,8-dihydroneopterin triphosphate biosynthesis; 7,8-dihydroneopterin triphosphate from GTP: step 1/1. The polypeptide is GTP cyclohydrolase 1 (Streptococcus pneumoniae serotype 19F (strain G54)).